Reading from the N-terminus, the 369-residue chain is Beta-1,4-galactosyltransferase 2 (369 aa).

Topologically, residues 1 to 15 are cytoplasmic; it reads MSRLLGGTLERVCKA. Residues 16-36 traverse the membrane as a helical; Signal-anchor for type II membrane protein segment; that stretch reads VLLLCLLHFLVAVILYFDVYA. Residues 37–369 are Lumenal-facing; it reads QHLAFFSRFS…GQPMSWLTQG (333 aa). Positions 58–73 are enriched in polar residues; sequence ASSSTNCSRPNATAAS. Residues 58–90 form a disordered region; that stretch reads ASSSTNCSRPNATAASSGLPEVPSARPGPTAPV. N-linked (GlcNAc...) asparagine glycans are attached at residues asparagine 63 and asparagine 68. A disulfide bridge connects residues cysteine 94 and cysteine 136. Residues 147–151, 186–188, 214–215, and tryptophan 275 contribute to the UDP-alpha-D-galactose site; these read PFRHR, FNR, and VD. Cysteine 208 and cysteine 227 form a disulfide bridge. Position 215 (aspartate 215) interacts with Mn(2+). 277–280 lines the N-acetyl-D-glucosamine pocket; it reads GEDD. Histidine 308 serves as a coordination point for Mn(2+). Position 308 to 310 (308 to 310) interacts with UDP-alpha-D-galactose; the sequence is HDR. Arginine 320 provides a ligand contact to N-acetyl-D-glucosamine. Asparagine 354 is a glycosylation site (N-linked (GlcNAc...) asparagine).

Belongs to the glycosyltransferase 7 family. Mn(2+) is required as a cofactor.

The protein localises to the golgi apparatus. Its subcellular location is the golgi stack membrane. The catalysed reaction is D-glucose + UDP-alpha-D-galactose = lactose + UDP + H(+). It catalyses the reaction an N-acetyl-beta-D-glucosaminyl derivative + UDP-alpha-D-galactose = a beta-D-galactosyl-(1-&gt;4)-N-acetyl-beta-D-glucosaminyl derivative + UDP + H(+). The enzyme catalyses N-acetyl-D-glucosamine + UDP-alpha-D-galactose = beta-D-galactosyl-(1-&gt;4)-N-acetyl-D-glucosamine + UDP + H(+). It functions in the pathway protein modification; protein glycosylation. Responsible for the synthesis of complex-type N-linked oligosaccharides in many glycoproteins as well as the carbohydrate moieties of glycolipids. Can produce lactose. The polypeptide is Beta-1,4-galactosyltransferase 2 (Mus musculus (Mouse)).